The chain runs to 256 residues: Coiled-coil domain-containing protein 90B, mitochondrial (256 aa).

Residues 1 to 42 (MRNRWIWRFLRPECSGIRWISSPHGRLSPALRRGFLTTTTKS) constitute a mitochondrion transit peptide. Positions 106–164 (AQQEITIQQLMAHLDSIRKDMVILEKSEFANLRAENEKMKIELDQVKQQLINETSRIRA) form a coiled coil. The helical transmembrane segment at 231–253 (TIRYLAASVFTCLAIALGFYRFW) threads the bilayer.

Belongs to the CCDC90 family. In terms of assembly, interacts with MCU.

It is found in the mitochondrion membrane. This is Coiled-coil domain-containing protein 90B, mitochondrial (Ccdc90b) from Rattus norvegicus (Rat).